The following is a 665-amino-acid chain: Protein LOW PHOTOSYNTHETIC EFFICIENCY 1, chloroplastic (665 aa).

The transit peptide at 1–68 (MQALSILPLK…VSSNRKVLFL (68 aa)) directs the protein to the chloroplast. PPR repeat units lie at residues 145-179 (PLQV…KSES), 181-217 (GVIG…GIVP), 218-252 (NIVT…GFEP), 253-283 (NPIT…LREK), 309-344 (GRIC…GVRP), 345-375 (SREE…IRER), 380-414 (SLSV…GPEP), 422-456 (VVSH…GLKP), 457-491 (QRRH…GEKP), 492-526 (TVIS…GIEP), 527-561 (NLYA…GIEP), 562-596 (SVVT…NVEP), and 597-631 (NEIT…GLKL).

Belongs to the PPR family. P subfamily. As to quaternary structure, interacts with HCF173.

Its subcellular location is the plastid. The protein localises to the chloroplast thylakoid membrane. It is found in the chloroplast stroma. In terms of biological role, required for light-regulated photosystem II (PSII) biogenesis and grana thylakoids formation by binding to the 5' UTR of PSII subunit mRNAs (e.g. psbJ, psbN and psbA) in a light-dependent manner through a redox-based mechanism, and facilitating the association of HCF173 with target mRNAs, which encodes PSII reaction center proteins (e.g. J, N and D1), thus regulating its expression by modulating ribosome loading. This chain is Protein LOW PHOTOSYNTHETIC EFFICIENCY 1, chloroplastic, found in Arabidopsis thaliana (Mouse-ear cress).